A 586-amino-acid chain; its full sequence is Aspartate--tRNA(Asp/Asn) ligase (586 aa).

Glutamate 176 is an L-aspartate binding site. Residues 200-203 form an aspartate region; that stretch reads QIFK. Arginine 222 serves as a coordination point for L-aspartate. ATP contacts are provided by residues 222–224 and glutamine 231; that span reads RDE. Histidine 449 lines the L-aspartate pocket. Glutamate 483 contacts ATP. L-aspartate is bound at residue arginine 490. 535–538 serves as a coordination point for ATP; the sequence is GIDR.

The protein belongs to the class-II aminoacyl-tRNA synthetase family. Type 1 subfamily. As to quaternary structure, homodimer.

The protein resides in the cytoplasm. The enzyme catalyses tRNA(Asx) + L-aspartate + ATP = L-aspartyl-tRNA(Asx) + AMP + diphosphate. Functionally, aspartyl-tRNA synthetase with relaxed tRNA specificity since it is able to aspartylate not only its cognate tRNA(Asp) but also tRNA(Asn). Reaction proceeds in two steps: L-aspartate is first activated by ATP to form Asp-AMP and then transferred to the acceptor end of tRNA(Asp/Asn). In Brachyspira hyodysenteriae (strain ATCC 49526 / WA1), this protein is Aspartate--tRNA(Asp/Asn) ligase.